Reading from the N-terminus, the 348-residue chain is Heat-inducible transcription repressor HrcA (348 aa).

The protein belongs to the HrcA family.

In terms of biological role, negative regulator of class I heat shock genes (grpE-dnaK-dnaJ and groELS operons). Prevents heat-shock induction of these operons. This chain is Heat-inducible transcription repressor HrcA, found in Thermodesulfovibrio yellowstonii (strain ATCC 51303 / DSM 11347 / YP87).